A 188-amino-acid polypeptide reads, in one-letter code: dCTP deaminase (188 aa).

Residues 111-116, 135-137, Gln156, Tyr170, Lys179, and Gln180 each bind dCTP; these read KSTYAR and TLE. The Proton donor/acceptor role is filled by Glu137.

Belongs to the dCTP deaminase family. As to quaternary structure, homotrimer.

It carries out the reaction dCTP + H2O + H(+) = dUTP + NH4(+). It functions in the pathway pyrimidine metabolism; dUMP biosynthesis; dUMP from dCTP (dUTP route): step 1/2. Functionally, catalyzes the deamination of dCTP to dUTP. This Rickettsia canadensis (strain McKiel) protein is dCTP deaminase.